We begin with the raw amino-acid sequence, 293 residues long: Outer membrane protein assembly factor BamD (293 aa).

A signal peptide spans 1–26 (MIQRPTFFSPIHLLAVLLATFILITG). C27 is lipidated: N-palmitoyl cysteine. Residue C27 is the site of S-diacylglycerol cysteine attachment.

Belongs to the BamD family. As to quaternary structure, part of the Bam complex.

It localises to the cell outer membrane. In terms of biological role, part of the outer membrane protein assembly complex, which is involved in assembly and insertion of beta-barrel proteins into the outer membrane. In Xylella fastidiosa (strain Temecula1 / ATCC 700964), this protein is Outer membrane protein assembly factor BamD.